We begin with the raw amino-acid sequence, 463 residues long: Glycine--tRNA ligase (463 aa).

Residues Arg100 and Glu175 each contribute to the substrate site. Residues 207 to 209 (RNE), 217 to 222 (FRTREF), 291 to 292 (EL), and 335 to 338 (GADR) each bind ATP. 222-226 (FEQME) is a binding site for substrate. Substrate is bound at residue 331-335 (EPSVG).

The protein belongs to the class-II aminoacyl-tRNA synthetase family. As to quaternary structure, homodimer.

The protein resides in the cytoplasm. It catalyses the reaction tRNA(Gly) + glycine + ATP = glycyl-tRNA(Gly) + AMP + diphosphate. Its function is as follows. Catalyzes the attachment of glycine to tRNA(Gly). This Clostridium kluyveri (strain NBRC 12016) protein is Glycine--tRNA ligase.